The following is a 188-amino-acid chain: Elongation factor P (188 aa).

Lys34 carries the post-translational modification N6-(3,6-diaminohexanoyl)-5-hydroxylysine.

Belongs to the elongation factor P family. Post-translationally, may be beta-lysylated on the epsilon-amino group of Lys-34 by the combined action of EpmA and EpmB, and then hydroxylated on the C5 position of the same residue by EpmC (if this protein is present). Lysylation is critical for the stimulatory effect of EF-P on peptide-bond formation. The lysylation moiety may extend toward the peptidyltransferase center and stabilize the terminal 3-CCA end of the tRNA. Hydroxylation of the C5 position on Lys-34 may allow additional potential stabilizing hydrogen-bond interactions with the P-tRNA.

Its subcellular location is the cytoplasm. Its pathway is protein biosynthesis; polypeptide chain elongation. Its function is as follows. Involved in peptide bond synthesis. Alleviates ribosome stalling that occurs when 3 or more consecutive Pro residues or the sequence PPG is present in a protein, possibly by augmenting the peptidyl transferase activity of the ribosome. Modification of Lys-34 is required for alleviation. In Histophilus somni (strain 129Pt) (Haemophilus somnus), this protein is Elongation factor P.